Consider the following 814-residue polypeptide: Kinesin-like protein KIF6 (814 aa).

Positions 5-345 (TIQIFARVKP…CRFAQRVALI (341 aa)) constitute a Kinesin motor domain. Position 97 to 104 (97 to 104 (GQTGSGKT)) interacts with ATP. Coiled coils occupy residues 356–385 (NPRLVIKRLQKEIQELKDELAMVTGEQRTE), 456–494 (LKEEEYRKLRDILKQRDNEINILVNMLKKEKKKAQEALH), and 588–683 (EAKA…KEFE). Positions 752 to 788 (LPSPCPSPHSQKQSSTSTPLEDSIPKRPVSSIPLTGD) are disordered. Residues 759–771 (PHSQKQSSTSTPL) are compositionally biased toward polar residues.

This sequence belongs to the TRAFAC class myosin-kinesin ATPase superfamily. Kinesin family.

It is found in the cytoplasm. The protein resides in the cytoskeleton. The polypeptide is Kinesin-like protein KIF6 (KIF6) (Homo sapiens (Human)).